We begin with the raw amino-acid sequence, 626 residues long: ATP-dependent zinc metalloprotease FtsH (626 aa).

The Cytoplasmic segment spans residues 1–7 (MNGNRPN). The helical transmembrane segment at 8–28 (YISLIFAALVILSLFWLVRSF) threads the bilayer. At 29–108 (YFDTSAPSKM…VTGEKGVSSS (80 aa)) the chain is on the periplasmic side. Residues 109–129 (FWVNVIGNVIFIGFLLFMFFF) traverse the membrane as a helical segment. Over 130-626 (MMRTISGRNN…RAAAGSEQDS (497 aa)) the chain is Cytoplasmic. 202-209 (GPPGTGKT) is a binding site for ATP. Position 424 (H424) interacts with Zn(2+). The active site involves E425. H428 and D501 together coordinate Zn(2+).

It in the central section; belongs to the AAA ATPase family. The protein in the C-terminal section; belongs to the peptidase M41 family. Homohexamer. Requires Zn(2+) as cofactor.

It is found in the cell inner membrane. In terms of biological role, acts as a processive, ATP-dependent zinc metallopeptidase for both cytoplasmic and membrane proteins. Plays a role in the quality control of integral membrane proteins. This Pseudothermotoga lettingae (strain ATCC BAA-301 / DSM 14385 / NBRC 107922 / TMO) (Thermotoga lettingae) protein is ATP-dependent zinc metalloprotease FtsH.